The following is a 337-amino-acid chain: Heme A synthase (337 aa).

5 helical membrane-spanning segments follow: residues 6-26 (ITKW…IGGI), 87-107 (FIHR…VIYF), 119-139 (LPYI…WYMV), 154-174 (LAFH…QLIK), and 192-212 (LIFS…GALV). Position 256 (histidine 256) interacts with heme. Helical transmembrane passes span 258 to 278 (LVGY…LKIE), 285 to 305 (IAYF…ITLL), and 308 to 328 (VPII…SVII). Histidine 316 is a binding site for heme.

The protein belongs to the COX15/CtaA family. Type 2 subfamily. In terms of assembly, interacts with CtaB. The cofactor is heme b.

It is found in the cell membrane. The catalysed reaction is Fe(II)-heme o + 2 A + H2O = Fe(II)-heme a + 2 AH2. It participates in porphyrin-containing compound metabolism; heme A biosynthesis; heme A from heme O: step 1/1. In terms of biological role, catalyzes the conversion of heme O to heme A by two successive hydroxylations of the methyl group at C8. The first hydroxylation forms heme I, the second hydroxylation results in an unstable dihydroxymethyl group, which spontaneously dehydrates, resulting in the formyl group of heme A. In Rickettsia rickettsii (strain Iowa), this protein is Heme A synthase.